A 304-amino-acid polypeptide reads, in one-letter code: Probable aquaporin NIP5-1 (304 aa).

2 helical membrane-spanning segments follow: residues 80–100 and 106–126; these read LGAEFVGTFILIFTATAGPIV and GAETLIGNAACAGLAVMIIIL. Residues 137-139 carry the NPA 1 motif; sequence NPS. Helical transmembrane passes span 157–177, 195–215, and 219–239; these read AYIAAQVSASICASFALKGVF, AFALEFIITFILLFVVTAVAT, and AVGELAGIAVGATVMLNILVA. An NPA 2 motif is present at residues 248–250; it reads NPV. Residues 266–286 traverse the membrane as a helical segment; the sequence is WVYLVAPTLGAISGAAVYTGV. The residue at position 301 (serine 301) is a Phosphoserine.

Belongs to the MIP/aquaporin (TC 1.A.8) family. NIP (TC 1.A.8.12) subfamily. Expressed in rosette leaves.

The protein localises to the cell membrane. In terms of biological role, boric acid transporter. Low water transport activity. Plays an important role as plasma membrane boric acid channel for the boron uptake required for plant growth and development under boron limitation. In Arabidopsis thaliana (Mouse-ear cress), this protein is Probable aquaporin NIP5-1 (NIP5-1).